The following is a 307-amino-acid chain: tRNA pseudouridine synthase B (307 aa).

Aspartate 41 (nucleophile) is an active-site residue.

The protein belongs to the pseudouridine synthase TruB family. Type 1 subfamily.

It carries out the reaction uridine(55) in tRNA = pseudouridine(55) in tRNA. Functionally, responsible for synthesis of pseudouridine from uracil-55 in the psi GC loop of transfer RNAs. This Prochlorococcus marinus (strain MIT 9312) protein is tRNA pseudouridine synthase B.